The sequence spans 150 residues: Arginine repressor (150 aa).

Belongs to the ArgR family.

Its subcellular location is the cytoplasm. The protein operates within amino-acid biosynthesis; L-arginine biosynthesis [regulation]. In terms of biological role, regulates arginine biosynthesis genes. In Staphylococcus haemolyticus (strain JCSC1435), this protein is Arginine repressor.